The sequence spans 349 residues: Eukaryotic translation initiation factor 3 subunit I (349 aa).

WD repeat units lie at residues 8–49 (GHER…GTLE), 51–91 (HIGT…QSWE), 93–135 (PTPV…DYTK), 148–187 (SDAK…FIET), 197–239 (EKIA…KVYK), and 295–336 (GHFG…FEFD).

It belongs to the eIF-3 subunit I family. As to quaternary structure, component of the eukaryotic translation initiation factor 3 (eIF-3) complex.

The protein resides in the cytoplasm. Its function is as follows. Component of the eukaryotic translation initiation factor 3 (eIF-3) complex, which is involved in protein synthesis of a specialized repertoire of mRNAs and, together with other initiation factors, stimulates binding of mRNA and methionyl-tRNAi to the 40S ribosome. The eIF-3 complex specifically targets and initiates translation of a subset of mRNAs involved in cell proliferation. The sequence is that of Eukaryotic translation initiation factor 3 subunit I from Debaryomyces hansenii (strain ATCC 36239 / CBS 767 / BCRC 21394 / JCM 1990 / NBRC 0083 / IGC 2968) (Yeast).